The primary structure comprises 350 residues: tRNA pseudouridine synthase D (350 aa).

Asp-85 (nucleophile) is an active-site residue. The TRUD domain maps to 160–310 (GVINYFGEQR…EAARRTILLR (151 aa)).

Belongs to the pseudouridine synthase TruD family.

It carries out the reaction uridine(13) in tRNA = pseudouridine(13) in tRNA. Responsible for synthesis of pseudouridine from uracil-13 in transfer RNAs. The chain is tRNA pseudouridine synthase D from Idiomarina loihiensis (strain ATCC BAA-735 / DSM 15497 / L2-TR).